Reading from the N-terminus, the 828-residue chain is Periplasmic nitrate reductase 1 (828 aa).

The tat-type signal signal peptide spans 1-30; sequence MKMTRRAFVKANAAASAAAVAGITLPASAA. The 57-residue stretch at 41-97 folds into the 4Fe-4S Mo/W bis-MGD-type domain; sequence IKWDKAPCRFCGTGCSVLVGTQNGRVVATQGDPEAPVNKGLNCIKGYFLSKIMYGKD. Cysteine 48, cysteine 51, cysteine 55, and cysteine 83 together coordinate [4Fe-4S] cluster. Residues lysine 85, glutamine 152, asparagine 177, cysteine 181, 214 to 221, 245 to 249, 264 to 266, methionine 374, glutamine 378, asparagine 484, 510 to 511, lysine 533, aspartate 560, and 718 to 727 each bind Mo-bis(molybdopterin guanine dinucleotide); these read WGSNMAEM, STYYH, QTD, SD, and TGRVLEHWHT. Phenylalanine 794 is a substrate binding site. Mo-bis(molybdopterin guanine dinucleotide) contacts are provided by asparagine 802 and lysine 819.

It belongs to the prokaryotic molybdopterin-containing oxidoreductase family. NasA/NapA/NarB subfamily. Component of the periplasmic nitrate reductase NapAB complex composed of NapA and NapB. The cofactor is [4Fe-4S] cluster. Mo-bis(molybdopterin guanine dinucleotide) serves as cofactor. In terms of processing, predicted to be exported by the Tat system. The position of the signal peptide cleavage has not been experimentally proven.

The protein resides in the periplasm. It catalyses the reaction 2 Fe(II)-[cytochrome] + nitrate + 2 H(+) = 2 Fe(III)-[cytochrome] + nitrite + H2O. Catalytic subunit of the periplasmic nitrate reductase complex NapAB. Receives electrons from NapB and catalyzes the reduction of nitrate to nitrite. The chain is Periplasmic nitrate reductase 1 from Photobacterium profundum (strain SS9).